A 366-amino-acid chain; its full sequence is Growth hormone secretagogue receptor type 1 (366 aa).

Residues 1–40 (MWNATPSEEPGPNLTLPDLGWDAPPENDSLVEELLPLFPT) lie on the Extracellular side of the membrane. N-linked (GlcNAc...) asparagine glycosylation is found at Asn13 and Asn27. The helical transmembrane segment at 41-66 (PLLAGVTATCVALFVVGIAGNLLTML) threads the bilayer. The Cytoplasmic segment spans residues 67–72 (VVSRFR). The helical transmembrane segment at 73 to 96 (EMRTTTNLYLSSMAFSDLLIFLCM) threads the bilayer. Over 97-117 (PLDLFRLWQYRPWNLGNLLCK) the chain is Extracellular. The cysteines at positions 116 and 198 are disulfide-linked. A helical membrane pass occupies residues 118 to 139 (LFQFVSESCTYATVLTITALSV). The Cytoplasmic segment spans residues 140-162 (ERYFAICFPLRAKVVVTKGRVKL). Residues 163–183 (VILVIWAVAFCSAGPIFVLVG) traverse the membrane as a helical segment. Residues 184–211 (VEHDNGTDPRDTNECRATEFAVRSGLLT) are Extracellular-facing. Residues 212 to 235 (VMVWVSSVFFFLPVFCLTVLYSLI) traverse the membrane as a helical segment. Residues 236-263 (GRKLWRRKRGEAAVGSSLRDQNHKQTVK) are Cytoplasmic-facing. The helical transmembrane segment at 264 to 285 (MLAVVVFAFILCWLPFHVGRYL) threads the bilayer. Topologically, residues 286–302 (FSKSLEPGSVEIAQISQ) are extracellular. Residues 303–326 (YCNLVSFVLFYLSAAINPILYNIM) traverse the membrane as a helical segment. Residues 327–366 (SKKYRVAVFKLLGFEPFSQRKLSTLKDESSRAWTESSINT) lie on the Cytoplasmic side of the membrane.

The protein belongs to the G-protein coupled receptor 1 family. In terms of tissue distribution, pituitary and hypothalamus.

It is found in the cell membrane. Functionally, receptor for ghrelin, coupled to G-alpha-11 proteins. Stimulates growth hormone secretion. Also binds other growth hormone releasing peptides (GHRP) (e.g. Met-enkephalin and GHRP-6) as well as non-peptide, low molecular weight secretagogues (e.g. L-692,429, MK-0677, adenosine). This chain is Growth hormone secretagogue receptor type 1 (GHSR), found in Sus scrofa (Pig).